A 290-amino-acid chain; its full sequence is MPISKQKWIAYAQLMRFDKPIGTLLLLWPTLWALFLSVKGMPDLSILSIFVLGVIFMRAAGCVINDYADRHIDGAVKRTSKRPLATGAATPEEAKWLFVLLVFCSFILVLFLNTYAIVLSFIAVFLAFIYPFMKRYTHLPQLFLGMAFGWSIPMAYGASIEALPLECWLLFFANLAWTVAYDTQYAMVDRDDDLRIGVKSTAILFAQYDNKIISLLQIVTLFFLGLIGYLSQLHTSYFVVLFLATLLFVYQCKLIKDRERESCFKAFLNNNYFGAMVFVAFLFGIFFDKL.

A run of 8 helical transmembrane segments spans residues isoleucine 21–methionine 41, leucine 44–isoleucine 64, leucine 84–cysteine 104, phenylalanine 106–leucine 126, leucine 142–alanine 162, isoleucine 212–glutamine 232, threonine 235–isoleucine 255, and phenylalanine 267–phenylalanine 287.

Belongs to the UbiA prenyltransferase family. Mg(2+) serves as cofactor.

It localises to the cell inner membrane. It catalyses the reaction all-trans-octaprenyl diphosphate + 4-hydroxybenzoate = 4-hydroxy-3-(all-trans-octaprenyl)benzoate + diphosphate. Its pathway is cofactor biosynthesis; ubiquinone biosynthesis. In terms of biological role, catalyzes the prenylation of para-hydroxybenzoate (PHB) with an all-trans polyprenyl group. Mediates the second step in the final reaction sequence of ubiquinone-8 (UQ-8) biosynthesis, which is the condensation of the polyisoprenoid side chain with PHB, generating the first membrane-bound Q intermediate 3-octaprenyl-4-hydroxybenzoate. This chain is 4-hydroxybenzoate octaprenyltransferase, found in Pasteurella multocida (strain Pm70).